A 328-amino-acid chain; its full sequence is Src kinase-associated phosphoprotein 2 (328 aa).

The region spanning 103-206 is the PH domain; the sequence is EYLRAGYLEK…WVNIIMNSRG (104 aa). Residues 231–262 form a disordered region; it reads IYEELPEESEKPVTEIETPKATPVPVNNTSGK. Over residues 238–248 the composition is skewed to basic and acidic residues; it reads ESEKPVTEIET. The SH3 domain maps to 266 to 327; the sequence is DYANFYRGLW…PKAYIMEMYD (62 aa).

This sequence belongs to the SKAP family. Post-translationally, phosphorylated on tyrosines.

It is found in the cytoplasm. Functionally, may be involved in B-cell and macrophage adhesion processes. May play a role in src signaling pathway. The protein is Src kinase-associated phosphoprotein 2 (skap2) of Xenopus tropicalis (Western clawed frog).